The chain runs to 419 residues: Isocitrate dehydrogenase [NADP] 1 (419 aa).

Thr-105 serves as a coordination point for NADP(+). D-threo-isocitrate is bound by residues Ser-114, Asn-116, Arg-120, Arg-130, and Arg-154. Asp-308 contributes to the Mg(2+) binding site. NADP(+)-binding positions include 340 to 346 (HGTAPKY), Asn-353, Tyr-392, and Arg-396.

This sequence belongs to the isocitrate and isopropylmalate dehydrogenases family. Homodimer. Requires Mg(2+) as cofactor. It depends on Mn(2+) as a cofactor.

It carries out the reaction D-threo-isocitrate + NADP(+) = 2-oxoglutarate + CO2 + NADPH. With respect to regulation, IDH activity is not significantly affected by monovalent cations. The combined addition of Mn(2+) and another divalent cation results in the decrease of the activity. Its function is as follows. Catalyzes the oxidative decarboxylation of isocitrate to 2-oxoglutarate and carbon dioxide with the concomitant reduction of NADP(+). Cannot use NAD(+). This Psychrobacter sp. (strain 13A) protein is Isocitrate dehydrogenase [NADP] 1.